A 60-amino-acid polypeptide reads, in one-letter code: Cytochrome c oxidase subunit 9, mitochondrial (60 aa).

Residues M1 to D18 are Mitochondrial matrix-facing. The chain crosses the membrane as a helical span at residues I19–F37. Over H38–A57 the chain is Mitochondrial intermembrane. The propeptide at A58–E60 is removed in mature form.

This sequence belongs to the fungal cytochrome c oxidase subunit 7a family. As to quaternary structure, component of the cytochrome c oxidase (complex IV, CIV), a multisubunit enzyme composed of a catalytic core of 3 subunits and several supernumerary subunits. The complex exists as a monomer or a dimer and forms supercomplexes (SCs) in the inner mitochondrial membrane with ubiquinol-cytochrome c oxidoreductase (cytochrome b-c1 complex, complex III, CIII).

It localises to the mitochondrion inner membrane. It participates in energy metabolism; oxidative phosphorylation. Its function is as follows. Component of the cytochrome c oxidase, the last enzyme in the mitochondrial electron transport chain which drives oxidative phosphorylation. The respiratory chain contains 3 multisubunit complexes succinate dehydrogenase (complex II, CII), ubiquinol-cytochrome c oxidoreductase (cytochrome b-c1 complex, complex III, CIII) and cytochrome c oxidase (complex IV, CIV), that cooperate to transfer electrons derived from NADH and succinate to molecular oxygen, creating an electrochemical gradient over the inner membrane that drives transmembrane transport and the ATP synthase. Cytochrome c oxidase is the component of the respiratory chain that catalyzes the reduction of oxygen to water. Electrons originating from reduced cytochrome c in the intermembrane space (IMS) are transferred via the dinuclear copper A center (CU(A)) of subunit 2 and heme A of subunit 1 to the active site in subunit 1, a binuclear center (BNC) formed by heme A3 and copper B (CU(B)). The BNC reduces molecular oxygen to 2 water molecules using 4 electrons from cytochrome c in the IMS and 4 protons from the mitochondrial matrix. This chain is Cytochrome c oxidase subunit 9, mitochondrial (COX9), found in Eremothecium gossypii (strain ATCC 10895 / CBS 109.51 / FGSC 9923 / NRRL Y-1056) (Yeast).